We begin with the raw amino-acid sequence, 553 residues long: Dihydroxy-acid dehydratase (553 aa).

Residue Asp-78 participates in Mg(2+) binding. Cys-119 is a [2Fe-2S] cluster binding site. Positions 120 and 121 each coordinate Mg(2+). Lys-121 is subject to N6-carboxylysine. Cys-193 lines the [2Fe-2S] cluster pocket. Glu-441 serves as a coordination point for Mg(2+). Ser-467 serves as the catalytic Proton acceptor.

The protein belongs to the IlvD/Edd family. In terms of assembly, homodimer. [2Fe-2S] cluster serves as cofactor. Mg(2+) is required as a cofactor.

It catalyses the reaction (2R)-2,3-dihydroxy-3-methylbutanoate = 3-methyl-2-oxobutanoate + H2O. It carries out the reaction (2R,3R)-2,3-dihydroxy-3-methylpentanoate = (S)-3-methyl-2-oxopentanoate + H2O. The protein operates within amino-acid biosynthesis; L-isoleucine biosynthesis; L-isoleucine from 2-oxobutanoate: step 3/4. It participates in amino-acid biosynthesis; L-valine biosynthesis; L-valine from pyruvate: step 3/4. Its function is as follows. Functions in the biosynthesis of branched-chain amino acids. Catalyzes the dehydration of (2R,3R)-2,3-dihydroxy-3-methylpentanoate (2,3-dihydroxy-3-methylvalerate) into 2-oxo-3-methylpentanoate (2-oxo-3-methylvalerate) and of (2R)-2,3-dihydroxy-3-methylbutanoate (2,3-dihydroxyisovalerate) into 2-oxo-3-methylbutanoate (2-oxoisovalerate), the penultimate precursor to L-isoleucine and L-valine, respectively. The polypeptide is Dihydroxy-acid dehydratase (Geobacter metallireducens (strain ATCC 53774 / DSM 7210 / GS-15)).